A 555-amino-acid polypeptide reads, in one-letter code: MERPAPGEVVMSQAIQPAHATARGELSAGQLLKWIDTTACLAAEKHAGVSCVTASVDDIQFEETARVGQVITIKAKVTRAFSTSMEISIKVMVQDMLTGIEKLVSVAFSTFVAKPVGKEKIHLKPVTLLTEQDHVEHNLAAERRKVRLQHEDTFNNLMKESSKFDDLIFDEEEGAVSTRGTSVQSIELVLPPHANHHGNTFGGQIMAWMETVATISASRLCWAHPFLKSVDMFKFRGPSTVGDRLVFTAIVNNTFQTCVEVGVRVEAFDCQEWAEGRGRHINSAFLIYNAADDKENLITFPRIQPISKDDFRRYRGAIARKRIRLGRKYVISHKEEVPLCIHWDISKQASLSDSNVEALKKLAAKRGWEVTSTVEKIKIYTLEEHDVLSVWVEKHVGSPAHLAYRLLSDFTKRPLWDPHFVSCEVIDWVSEDDQLYHITCPILNDDKPKDLVVLVSRRKPLKDGNTYTVAVKSVILPSVPPSPQYIRSEIICAGFLIHAIDSNSCIVSYFNHMSASILPYFAGNLGGWSKSIEETAASCIQFLENPPDDGFVSTF.

The region spanning 5-117 (APGEVVMSQA…FSTFVAKPVG (113 aa)) is the HotDog ACOT-type 1 domain. Lysine 33 carries the post-translational modification N6-succinyllysine. Residues 53 to 55 (TAS), 82 to 84 (STS), and arginine 144 each bind CoA. N6-succinyllysine is present on residues lysine 159 and lysine 228. The 116-residue stretch at 179–294 (RGTSVQSIEL…FLIYNAADDK (116 aa)) folds into the HotDog ACOT-type 2 domain. 234 to 236 (KFR) provides a ligand contact to CoA. Positions 340–549 (CIHWDISKQA…IQFLENPPDD (210 aa)) constitute an START domain.

In terms of assembly, homodimer or homotetramer.

The protein resides in the cytoplasm. It is found in the cytosol. The catalysed reaction is acetyl-CoA + H2O = acetate + CoA + H(+). It carries out the reaction butanoyl-CoA + H2O = butanoate + CoA + H(+). The enzyme catalyses hexanoyl-CoA + H2O = hexanoate + CoA + H(+). The protein operates within lipid metabolism; fatty acid metabolism. With respect to regulation, inhibited by ADP. Active in the presence of ATP. Cold labile, it dissociates into inactive monomers at low temperature. Its function is as follows. Catalyzes the hydrolysis of acyl-CoAs into free fatty acids and coenzyme A (CoASH), regulating their respective intracellular levels. Preferentially hydrolyzes acetyl-CoA. The protein is Acetyl-coenzyme A thioesterase (ACOT12) of Homo sapiens (Human).